Consider the following 167-residue polypeptide: uncharacterized protein (167 aa).

Transmembrane regions (helical) follow at residues 96-115 (YVPAFIPLFAAYLTMFFNFY) and 119-138 (WGALSFAAGTIAAIVWIIAV).

It is found in the cell membrane. This is an uncharacterized protein from Bacillus subtilis (strain 168).